We begin with the raw amino-acid sequence, 288 residues long: Galactose/N-acetyl-D-galactosamine lectin light subunit 1 (288 aa).

The first 15 residues, 1 to 15 (MIILVLLISYSFGKT), serve as a signal peptide directing secretion. Asparagine 205 and asparagine 261 each carry an N-linked (GlcNAc...) asparagine glycan.

In terms of assembly, heterodimer composed of a 170 kDa heavy subunit (hgl) and a 31/35 kDa light subunit (lgl); disulfide-linked.

It localises to the cell membrane. In terms of biological role, light subunit of a heterodimeric lectin; the heavy subunit binds galactose and N-acetyl-D-galactosamine of host glycoproteins and thus mediates adhesion to host cells. The polypeptide is Galactose/N-acetyl-D-galactosamine lectin light subunit 1 (Entamoeba histolytica (strain ATCC 30459 / HM-1:IMSS / ABRM)).